Here is a 185-residue protein sequence, read N- to C-terminus: Ribosome-recycling factor (185 aa).

It belongs to the RRF family.

Its subcellular location is the cytoplasm. Functionally, responsible for the release of ribosomes from messenger RNA at the termination of protein biosynthesis. May increase the efficiency of translation by recycling ribosomes from one round of translation to another. This chain is Ribosome-recycling factor, found in Buchnera aphidicola subsp. Acyrthosiphon pisum (strain APS) (Acyrthosiphon pisum symbiotic bacterium).